The sequence spans 179 residues: Protein Syd (179 aa).

It belongs to the Syd family.

It localises to the cell inner membrane. Its function is as follows. Interacts with the SecY protein in vivo. May bind preferentially to an uncomplexed state of SecY, thus functioning either as a chelating agent for excess SecY in the cell or as a regulatory factor that negatively controls the translocase function. The chain is Protein Syd from Pseudoalteromonas translucida (strain TAC 125).